The following is a 325-amino-acid chain: 8-oxo-dGDP phosphatase NUDT18 (325 aa).

Positions Asn-38 to Leu-163 constitute a Nudix hydrolase domain. Leu-55 provides a ligand contact to Mg(2+). Residues Gly-73–Gly-94 carry the Nudix box motif.

The protein belongs to the Nudix hydrolase family. It depends on Mn(2+) as a cofactor. The cofactor is Mg(2+).

The enzyme catalyses 8-oxo-dGDP + H2O = 8-oxo-dGMP + phosphate + H(+). It catalyses the reaction 8-oxo-dADP + H2O = 8-oxo-dAMP + phosphate + H(+). It carries out the reaction 2-oxo-dADP + H2O = 2-oxo-dAMP + phosphate + H(+). The catalysed reaction is 8-oxo-GDP + H2O = 8-oxo-GMP + phosphate + H(+). Functionally, mediates the hydrolysis of oxidized nucleoside diphosphate derivatives. Hydrolyzes 8-oxo-7,8-dihydroguanine (8-oxo-Gua)-containing deoxyribo- and ribonucleoside diphosphates to the monophosphates. Hydrolyzes 8-oxo-dGDP and 8-oxo-GDP with the same efficiencies. Also hydrolyzes 8-OH-dADP and 2-OH-dADP. Exhibited no or minimal hydrolysis activity against 8-oxo-dGTP, 8-oxo-GTP, dGTP, GTP, dGDP and GDP. Probably removes oxidized guanine nucleotides from both the DNA and RNA precursor pools. This Danio rerio (Zebrafish) protein is 8-oxo-dGDP phosphatase NUDT18 (nudt18).